The sequence spans 78 residues: Antitoxin FitA (78 aa).

As to quaternary structure, homodimer in the absence of FitB; forms a heterodimer with FitB; 4 FitAB heterodimers form a complex that binds to fitAB promoter DNA. The complex is also seen in solution.

Functionally, antitoxin component of a type II toxin-antitoxin (TA) system. Plays a role in the speed with which bacteria traverse human epithelial cells; disruption of the locus increases the speed of trafficking about 2-4-fold. Binds to its own promoter, binding affinity of the FitAB complex is 20-30-fold higher than FitA alone. No nuclease activity was observed for the FitAB complex, perhaps because FitA (the antitoxin) prevents metal binding and thus catalysis by FitB. This chain is Antitoxin FitA (fitA), found in Neisseria gonorrhoeae (strain ATCC 700825 / FA 1090).